Consider the following 369-residue polypeptide: Dof zinc finger protein DOF2.5 (369 aa).

The segment at 80–134 (LNCPRCNSTNTKFCYYNNYSLTQPRYFCKGCRRYWTEGGSLRNVPVGGSSRKNKR) adopts a Dof-type zinc-finger fold. Zn(2+) contacts are provided by Cys-82, Cys-85, Cys-107, and Cys-110. Disordered stretches follow at residues 120–149 (LRNVPVGGSSRKNKRSSSSSSSNILQTIPS), 203–224 (EGNGNITHQQQPSSSSSVYGSS), 284–304 (TDHQGLGHNSNNRSEALHSDH), and 322–369 (SSSI…GSSW). Residues 214-224 (PSSSSSVYGSS) show a composition bias toward low complexity. Polar residues predominate over residues 284 to 297 (TDHQGLGHNSNNRS). Over residues 342 to 362 (NNNNNNNSSPNNGYWSGMFST) the composition is skewed to low complexity.

Expressed in the vascular system of the mother plant, but not present in the seed and embryo. In maturing siliques, found all through the funiculus connecting the placenta to the ovule, but not in the ovule.

The protein resides in the nucleus. Transcription factor specifically involved in the maternal control of seed germination. Regulates transcription by binding to a 5'-AA[AG]G-3' consensus core sequence. May ensure the activation of a component that would trigger germination as a consequence of red light perception. This Arabidopsis thaliana (Mouse-ear cress) protein is Dof zinc finger protein DOF2.5 (DOF2.5).